Reading from the N-terminus, the 196-residue chain is Phosphoheptose isomerase (196 aa).

Residues 36-196 (MTNCLINGGK…GIDALLLGVE (161 aa)) form the SIS domain. 51–53 (NGG) is a substrate binding site. 2 residues coordinate Zn(2+): His-60 and Glu-64. Substrate is bound by residues Glu-64, 93–94 (ND), 119–121 (STS), Ser-124, and Gln-174. Gln-174 and His-182 together coordinate Zn(2+).

Belongs to the SIS family. GmhA subfamily. As to quaternary structure, homotetramer. It depends on Zn(2+) as a cofactor.

Its subcellular location is the cytoplasm. The catalysed reaction is 2 D-sedoheptulose 7-phosphate = D-glycero-alpha-D-manno-heptose 7-phosphate + D-glycero-beta-D-manno-heptose 7-phosphate. It functions in the pathway carbohydrate biosynthesis; D-glycero-D-manno-heptose 7-phosphate biosynthesis; D-glycero-alpha-D-manno-heptose 7-phosphate and D-glycero-beta-D-manno-heptose 7-phosphate from sedoheptulose 7-phosphate: step 1/1. Catalyzes the isomerization of sedoheptulose 7-phosphate in D-glycero-D-manno-heptose 7-phosphate. The sequence is that of Phosphoheptose isomerase from Dechloromonas aromatica (strain RCB).